Reading from the N-terminus, the 643-residue chain is Threonine--tRNA ligase (643 aa).

Residues 1–61 enclose the TGS domain; sequence MVAISLPDGS…TTDASVSLIT (61 aa). A catalytic region spans residues 243–534; the sequence is DHRRVGQEMD…LIENCAGRFP (292 aa). Zn(2+)-binding residues include cysteine 334, histidine 385, and histidine 511.

This sequence belongs to the class-II aminoacyl-tRNA synthetase family. In terms of assembly, homodimer. Requires Zn(2+) as cofactor.

It is found in the cytoplasm. The catalysed reaction is tRNA(Thr) + L-threonine + ATP = L-threonyl-tRNA(Thr) + AMP + diphosphate + H(+). Its function is as follows. Catalyzes the attachment of threonine to tRNA(Thr) in a two-step reaction: L-threonine is first activated by ATP to form Thr-AMP and then transferred to the acceptor end of tRNA(Thr). Also edits incorrectly charged L-seryl-tRNA(Thr). This chain is Threonine--tRNA ligase, found in Rhodospirillum rubrum (strain ATCC 11170 / ATH 1.1.1 / DSM 467 / LMG 4362 / NCIMB 8255 / S1).